Here is a 90-residue protein sequence, read N- to C-terminus: Small ribosomal subunit protein bS16 (90 aa).

This sequence belongs to the bacterial ribosomal protein bS16 family.

The polypeptide is Small ribosomal subunit protein bS16 (Streptococcus equi subsp. zooepidemicus (strain H70)).